The sequence spans 529 residues: MTDLVPLRRALLSVSDKTGLVPLGQALAARGVELLSTGGTAKALREAGLDVVDVSDVTGFPEMMDGRVKTLHPKVHGGLLALRDNAAHVSAMERHGIGAIDLLVVNLYPFEATVAAGADYAACIENIDIGGPAMIRAAAKNHSFVTVLTDVEDYEALLGELEAREGATGYPFRQKMALNAYARTAAYDAAVSGWMTDALAEVAPRRRAVAGTLAQTLRYGENPHQGAAFYVDGSDRPGVATAVQHQGKELSYNNINDTDAAFELVAEFAPEDGPACAIIKHANPCGVARGATLAEAYTKAFQCDQTSAFGGIIALNRPLDGPTAEAISGIFTEVVIAPGADETARAVFAAKKNLRLLTTEGLPDPKAPALTVRQVSGGYLVQDKDNGNIGWDDLKVVTKRAPSEAEIADLLFAWKVAKHVKSNAIVYVKDGATVGVGAGQMSRVDSARIAARKSADMAEALGLETPLIQGSVVASDAFFPFPDGLLTAAEAGATAVIQPGGSMRDVEVIAAADAAGLAMVFTGMRHFRH.

Positions 2–149 (TDLVPLRRAL…KNHSFVTVLT (148 aa)) constitute an MGS-like domain.

The protein belongs to the PurH family.

The enzyme catalyses (6R)-10-formyltetrahydrofolate + 5-amino-1-(5-phospho-beta-D-ribosyl)imidazole-4-carboxamide = 5-formamido-1-(5-phospho-D-ribosyl)imidazole-4-carboxamide + (6S)-5,6,7,8-tetrahydrofolate. The catalysed reaction is IMP + H2O = 5-formamido-1-(5-phospho-D-ribosyl)imidazole-4-carboxamide. It participates in purine metabolism; IMP biosynthesis via de novo pathway; 5-formamido-1-(5-phospho-D-ribosyl)imidazole-4-carboxamide from 5-amino-1-(5-phospho-D-ribosyl)imidazole-4-carboxamide (10-formyl THF route): step 1/1. The protein operates within purine metabolism; IMP biosynthesis via de novo pathway; IMP from 5-formamido-1-(5-phospho-D-ribosyl)imidazole-4-carboxamide: step 1/1. This Dinoroseobacter shibae (strain DSM 16493 / NCIMB 14021 / DFL 12) protein is Bifunctional purine biosynthesis protein PurH.